We begin with the raw amino-acid sequence, 290 residues long: Elongation factor Ts (290 aa).

The involved in Mg(2+) ion dislocation from EF-Tu stretch occupies residues Thr82 to Val85.

This sequence belongs to the EF-Ts family.

The protein resides in the cytoplasm. Its function is as follows. Associates with the EF-Tu.GDP complex and induces the exchange of GDP to GTP. It remains bound to the aminoacyl-tRNA.EF-Tu.GTP complex up to the GTP hydrolysis stage on the ribosome. The protein is Elongation factor Ts of Cellvibrio japonicus (strain Ueda107) (Pseudomonas fluorescens subsp. cellulosa).